Consider the following 483-residue polypeptide: Endoplasmic reticulum lectin 1 (483 aa).

The signal sequence occupies residues 1 to 33; it reads MEEGDGGLRSLVPGGPLLLVLYGLLEASGGGRA. MRH domains follow at residues 111 to 246 and 342 to 469; these read SSCS…LCSH and SYCF…ICKI. C113 and C126 are oxidised to a cystine. The N-linked (GlcNAc...) asparagine glycan is linked to N195. Disulfide bonds link C199–C232, C215–C244, C344–C357, C421–C455, and C436–C467.

As to quaternary structure, may form a complex with OS9, HSPA5, SYVN1, and SEL1L with which it interacts directly. Interacts (via PRKCSH 2 domain) with KREMEN2 (when glycosylated). Interacts with HSPA5. N-glycosylated.

The protein localises to the endoplasmic reticulum lumen. Probable lectin that binds selectively to improperly folded lumenal proteins. May function in endoplasmic reticulum quality control and endoplasmic reticulum-associated degradation (ERAD) of both non-glycosylated proteins and glycoproteins. The chain is Endoplasmic reticulum lectin 1 (Erlec1) from Mus musculus (Mouse).